The sequence spans 162 residues: MERFFENAMYASRWLLAPIYFGLSLGLLALCLKFFQEIFHVIPNIFSLAEADLILVLLSLIDMALVGGLLVMVMISGYENFVSQLDIDEDKEKLNWLGTMDSSSLKMKVAASIVAISSIHLLRVFMDATNIKPEYLMWYVIIHMTFVISAFAMGYLDKVTKH.

Helical transmembrane passes span 15–35 (LLAP…LKFF), 53–73 (LILV…LVMV), 109–129 (VAAS…MDAT), and 136–156 (LMWY…MGYL).

The protein belongs to the UPF0114 family.

It is found in the cell membrane. The sequence is that of UPF0114 protein Psyr_4257 from Pseudomonas syringae pv. syringae (strain B728a).